Reading from the N-terminus, the 690-residue chain is Glycine--tRNA ligase beta subunit (690 aa).

The protein belongs to the class-II aminoacyl-tRNA synthetase family. In terms of assembly, tetramer of two alpha and two beta subunits.

It is found in the cytoplasm. It catalyses the reaction tRNA(Gly) + glycine + ATP = glycyl-tRNA(Gly) + AMP + diphosphate. The sequence is that of Glycine--tRNA ligase beta subunit from Buchnera aphidicola subsp. Acyrthosiphon pisum (strain Tuc7).